Here is a 112-residue protein sequence, read N- to C-terminus: MQLSPQEKDKLLIFTAALVAERRRARGLKLNYPEAVAYISAAILEGAREGRSVEELMSYGTTLLGKDDVMEGVPEMIHEVQIEATFPDGTKLVTVHNPIRLSVVPLVGSSQV.

The protein belongs to the urease gamma subunit family. In terms of assembly, heterotrimer of UreA (gamma), UreB (beta) and UreC (alpha) subunits. Three heterotrimers associate to form the active enzyme.

The protein resides in the cytoplasm. The enzyme catalyses urea + 2 H2O + H(+) = hydrogencarbonate + 2 NH4(+). Its pathway is nitrogen metabolism; urea degradation; CO(2) and NH(3) from urea (urease route): step 1/1. The chain is Urease subunit gamma from Gloeothece citriformis (strain PCC 7424) (Cyanothece sp. (strain PCC 7424)).